The chain runs to 250 residues: Ribosomal RNA small subunit methyltransferase J (250 aa).

S-adenosyl-L-methionine is bound by residues 101–102, 117–118, 153–154, and Asp-171; these read RD, ER, and SS.

This sequence belongs to the methyltransferase superfamily. RsmJ family.

The protein resides in the cytoplasm. The catalysed reaction is guanosine(1516) in 16S rRNA + S-adenosyl-L-methionine = N(2)-methylguanosine(1516) in 16S rRNA + S-adenosyl-L-homocysteine + H(+). Functionally, specifically methylates the guanosine in position 1516 of 16S rRNA. The polypeptide is Ribosomal RNA small subunit methyltransferase J (Shigella flexneri serotype 5b (strain 8401)).